We begin with the raw amino-acid sequence, 173 residues long: Crossover junction endodeoxyribonuclease RuvC (173 aa).

Catalysis depends on residues aspartate 8, glutamate 67, and aspartate 139. Mg(2+) contacts are provided by aspartate 8, glutamate 67, and aspartate 139.

It belongs to the RuvC family. As to quaternary structure, homodimer which binds Holliday junction (HJ) DNA. The HJ becomes 2-fold symmetrical on binding to RuvC with unstacked arms; it has a different conformation from HJ DNA in complex with RuvA. In the full resolvosome a probable DNA-RuvA(4)-RuvB(12)-RuvC(2) complex forms which resolves the HJ. The cofactor is Mg(2+).

Its subcellular location is the cytoplasm. It catalyses the reaction Endonucleolytic cleavage at a junction such as a reciprocal single-stranded crossover between two homologous DNA duplexes (Holliday junction).. Its function is as follows. The RuvA-RuvB-RuvC complex processes Holliday junction (HJ) DNA during genetic recombination and DNA repair. Endonuclease that resolves HJ intermediates. Cleaves cruciform DNA by making single-stranded nicks across the HJ at symmetrical positions within the homologous arms, yielding a 5'-phosphate and a 3'-hydroxyl group; requires a central core of homology in the junction. The consensus cleavage sequence is 5'-(A/T)TT(C/G)-3'. Cleavage occurs on the 3'-side of the TT dinucleotide at the point of strand exchange. HJ branch migration catalyzed by RuvA-RuvB allows RuvC to scan DNA until it finds its consensus sequence, where it cleaves and resolves the cruciform DNA. The chain is Crossover junction endodeoxyribonuclease RuvC from Shewanella piezotolerans (strain WP3 / JCM 13877).